The chain runs to 347 residues: Cytoplasmic tRNA 2-thiolation protein 1 (347 aa).

Residue S200 is modified to Phosphoserine. The segment at 315–347 (LAIGKGRRGLDEEGPPREPQPSRPLTSEPVPDF) is disordered.

Belongs to the TtcA family. CTU1/NCS6/ATPBD3 subfamily. Component of a complex at least composed of URM1, CTU2/NCS2 and CTU1/ATPBD3. May form a heterodimer with CTU2/NCS2.

It is found in the cytoplasm. Its pathway is tRNA modification; 5-methoxycarbonylmethyl-2-thiouridine-tRNA biosynthesis. Its function is as follows. Plays a central role in 2-thiolation of mcm(5)S(2)U at tRNA wobble positions of tRNA(Lys), tRNA(Glu) and tRNA(Gln). Directly binds tRNAs and probably acts by catalyzing adenylation of tRNAs, an intermediate required for 2-thiolation. It is unclear whether it acts as a sulfurtransferase that transfers sulfur from thiocarboxylated URM1 onto the uridine of tRNAs at wobble position. In Bos taurus (Bovine), this protein is Cytoplasmic tRNA 2-thiolation protein 1.